A 352-amino-acid polypeptide reads, in one-letter code: Uricase (352 aa).

The segment at 1 to 32 (MFATPLRQPAAANHQTPKNSAGMDEHGKPYQY) is disordered. Basic and acidic residues predominate over residues 23 to 32 (MDEHGKPYQY). Catalysis depends on charge relay system residues Lys41 and Thr86. The urate site is built by Thr86, Asp87, Phe214, Arg231, Val279, Gln280, and Asn306. The active-site Charge relay system is the His308. The Microbody targeting signal signature appears at 350-352 (SHL).

The protein belongs to the uricase family. In terms of tissue distribution, malpighian tubules.

It is found in the peroxisome. It catalyses the reaction urate + O2 + H2O = 5-hydroxyisourate + H2O2. The protein operates within purine metabolism; urate degradation; (S)-allantoin from urate: step 1/3. Its activity is regulated as follows. Repressed by 20-hydroxyecdysone. Catalyzes the oxidation of uric acid to 5-hydroxyisourate, which is further processed to form (S)-allantoin. This chain is Uricase (Uro), found in Drosophila melanogaster (Fruit fly).